The following is a 235-amino-acid chain: Proteasome subunit alpha (235 aa).

Belongs to the peptidase T1A family. The 20S proteasome core is composed of 14 alpha and 14 beta subunits that assemble into four stacked heptameric rings, resulting in a barrel-shaped structure. The two inner rings, each composed of seven catalytic beta subunits, are sandwiched by two outer rings, each composed of seven alpha subunits. The catalytic chamber with the active sites is on the inside of the barrel. Has a gated structure, the ends of the cylinder being occluded by the N-termini of the alpha-subunits. Is capped by the proteasome-associated ATPase, ARC.

The protein resides in the cytoplasm. It functions in the pathway protein degradation; proteasomal Pup-dependent pathway. With respect to regulation, the formation of the proteasomal ATPase ARC-20S proteasome complex, likely via the docking of the C-termini of ARC into the intersubunit pockets in the alpha-rings, may trigger opening of the gate for substrate entry. Interconversion between the open-gate and close-gate conformations leads to a dynamic regulation of the 20S proteasome proteolysis activity. Component of the proteasome core, a large protease complex with broad specificity involved in protein degradation. The sequence is that of Proteasome subunit alpha from Arthrobacter sp. (strain FB24).